Consider the following 496-residue polypeptide: Probable cytosol aminopeptidase (496 aa).

Mn(2+) is bound by residues Lys258 and Asp263. The active site involves Lys270. 3 residues coordinate Mn(2+): Asp281, Asp340, and Glu342. Arg344 is an active-site residue.

The protein belongs to the peptidase M17 family. Mn(2+) serves as cofactor.

The protein resides in the cytoplasm. The enzyme catalyses Release of an N-terminal amino acid, Xaa-|-Yaa-, in which Xaa is preferably Leu, but may be other amino acids including Pro although not Arg or Lys, and Yaa may be Pro. Amino acid amides and methyl esters are also readily hydrolyzed, but rates on arylamides are exceedingly low.. It carries out the reaction Release of an N-terminal amino acid, preferentially leucine, but not glutamic or aspartic acids.. Presumably involved in the processing and regular turnover of intracellular proteins. Catalyzes the removal of unsubstituted N-terminal amino acids from various peptides. The chain is Probable cytosol aminopeptidase from Helicobacter pylori (strain Shi470).